The chain runs to 207 residues: Guanylate kinase (207 aa).

In terms of domain architecture, Guanylate kinase-like spans 5-184; that stretch reads GNLFIVSAPS…ALADLRAIIR (180 aa). 12–19 serves as a coordination point for ATP; that stretch reads APSGAGKS.

The protein belongs to the guanylate kinase family.

It is found in the cytoplasm. It carries out the reaction GMP + ATP = GDP + ADP. Its function is as follows. Essential for recycling GMP and indirectly, cGMP. The sequence is that of Guanylate kinase from Shewanella oneidensis (strain ATCC 700550 / JCM 31522 / CIP 106686 / LMG 19005 / NCIMB 14063 / MR-1).